Here is a 127-residue protein sequence, read N- to C-terminus: Ribosome-binding factor A (127 aa).

It belongs to the RbfA family. As to quaternary structure, monomer. Binds 30S ribosomal subunits, but not 50S ribosomal subunits or 70S ribosomes.

The protein resides in the cytoplasm. One of several proteins that assist in the late maturation steps of the functional core of the 30S ribosomal subunit. Associates with free 30S ribosomal subunits (but not with 30S subunits that are part of 70S ribosomes or polysomes). Required for efficient processing of 16S rRNA. May interact with the 5'-terminal helix region of 16S rRNA. This Actinobacillus pleuropneumoniae serotype 7 (strain AP76) protein is Ribosome-binding factor A.